The chain runs to 194 residues: MAAKSTQDSLPRDTGEPSALPVQGRAEGRSSEGRKERTAECALRGKQASEPALRKRNFLPGPNSDTVRPAAETELVPCSLRHPRQDLCGEHPSFPVMQPSLETQAKPERDRAVLIPPKGPWPPAQGLAMRTHCPTGPPSKAYCRGGSSSTSRNQVASLAYRTQNTAASQPRQPGGRGKEDTAGYGSCSPRSLAV.

2 disordered regions span residues 1–72 and 113–194; these read MAAK…PAAE and VLIP…SLAV. Basic and acidic residues predominate over residues 26–39; it reads AEGRSSEGRKERTA. The segment covering 146-171 has biased composition (polar residues); sequence GSSSTSRNQVASLAYRTQNTAASQPR.

This is an uncharacterized protein from Homo sapiens (Human).